Consider the following 92-residue polypeptide: Small ribosomal subunit protein uS19 (92 aa).

It belongs to the universal ribosomal protein uS19 family.

Protein S19 forms a complex with S13 that binds strongly to the 16S ribosomal RNA. The protein is Small ribosomal subunit protein uS19 of Trichlorobacter lovleyi (strain ATCC BAA-1151 / DSM 17278 / SZ) (Geobacter lovleyi).